The sequence spans 136 residues: Ribonuclease P protein component (136 aa).

The protein belongs to the RnpA family. Consists of a catalytic RNA component (M1 or rnpB) and a protein subunit.

The enzyme catalyses Endonucleolytic cleavage of RNA, removing 5'-extranucleotides from tRNA precursor.. Functionally, RNaseP catalyzes the removal of the 5'-leader sequence from pre-tRNA to produce the mature 5'-terminus. It can also cleave other RNA substrates such as 4.5S RNA. The protein component plays an auxiliary but essential role in vivo by binding to the 5'-leader sequence and broadening the substrate specificity of the ribozyme. In Arthrobacter sp. (strain FB24), this protein is Ribonuclease P protein component.